The following is a 596-amino-acid chain: CRISPR-associated DNA-binding protein Cas12m (596 aa).

The recognition domain (REC1-N) stretch occupies residues 19–53; it reads EVLRQQLWLAHNLREDLVSLQLAYDDDLKAIWSSY. Residues 54-121 form a recognition domain (REC2) region; sequence PDVAQAEDTM…RDAIAVVKDD (68 aa). Coiled coils occupy residues 55-83 and 91-117; these read DVAQ…ARIE and TELT…AIAV. The interval 122–190 is recognition domain (REC1-C); it reads AAERRKARSD…LRHHRFDGSG (69 aa). Residues 191–302 form a wedge domain (WED) region; the sequence is TIAVQLQRQA…RAKLCVTARI (112 aa). The segment at 303-313 is linker; that stretch reads GDTEPVTSGPT. Residues 314–541 form a ruvC-I region; it reads VALHLGWRST…RDGVPVTIVA (228 aa). Position 317 (His-317) interacts with Mg(2+). Residues 541–577 are target nucleic-acid binding (TNB); that stretch reads AAADFTRTHSRCGHVNPADDRYLSNPVRCDGCGAMYD. Residues His-549, Cys-552, Cys-569, and Cys-572 each contribute to the Zn(2+) site. The interval 578-596 is ruvC-II; it reads QDRSFVTLMLRAATAPSNP. A Mg(2+)-binding site is contributed by Asp-579.

The protein belongs to the CRISPR-associated DNA-binding protein Cas12m family. As to quaternary structure, binds crRNA and target dsDNA as a monomer. The cofactor is Mg(2+). It depends on Zn(2+) as a cofactor.

In terms of biological role, CRISPR (clustered regularly interspaced short palindromic repeat), is an adaptive immune system that provides protection against mobile genetic elements (viruses, transposable elements and conjugative plasmids). CRISPR clusters contain sequences complementary to antecedent mobile elements and target invading nucleic acids. CRISPR clusters are transcribed and processed into CRISPR RNA (crRNA). Recognizes a short motif in the CRISPR repeat sequences (the 5' PAM or protospacer adjacent motif, 5'-TTN-3' in this organism) to help distinguish self versus nonself, as targets within the bacterial CRISPR locus do not have PAMs. Upon expression in E.coli as a CRISPR locus inhibits plasmid propagation when targeted to regions essential for plasmid propagation (replication origin and dnaA). The crRNA-Cas12m complex inhibits transcription from target DNA leading to gene silencing. Cas12m-crRNA binds DNA in a PAM-dependent, crRNA-guided fashion. Binds a 17-bp crRNA-ss-target DNA heteroduplex, in a 56 nucleotide crRNA. No dsDNA, ssDNA or RNA nuclease activity is seen for the crRNA-Cas12m complex. Is required to process pre-crRNA to mature crRNA without a tracrRNA. Upon expression in E.coli as a CRISPR region preferentially binds to its associated crRNA. The chain is CRISPR-associated DNA-binding protein Cas12m from Mycolicibacterium mucogenicum (Mycobacterium mucogenicum).